We begin with the raw amino-acid sequence, 159 residues long: Cathelicidin-5 (159 aa).

Residues 1-29 form the signal peptide; that stretch reads METQRASLSLGRWSLWLLLLGLALPSASA. A Pyrrolidone carboxylic acid modification is found at Q30. Positions 30-131 are excised as a propeptide; the sequence is QALSYREAVL…DITCAVPQSV (102 aa). 2 cysteine pairs are disulfide-bonded: C86/C97 and C108/C125.

Belongs to the cathelicidin family.

Its subcellular location is the secreted. Exerts a potent antimicrobial activity against Gram-negative and Gram-positive bacteria, including methicillin-resistant Staphylococcus aureus, and fungi. In Bos taurus (Bovine), this protein is Cathelicidin-5 (CATHL5).